Here is a 175-residue protein sequence, read N- to C-terminus: Two-on-two hemoglobin-3 (175 aa).

Heme is bound by residues Tyr85 and His98. The disordered stretch occupies residues 153 to 175; that stretch reads QNEKPKHKPQCACKHAANKPAEE.

The protein belongs to the truncated hemoglobin family. Group II subfamily. As to quaternary structure, homodimer when ferric. Interacts with RGLG3 and RGLG4. The cofactor is heme. As to expression, expressed ubiquitously, with higher levels in root tissue than in shoot tissue.

In terms of biological role, hemoglobin-like protein that exhibits an unusual concentration-independent binding of O(2) and CO. May promote shoot organogenesis from root explants in vitro. Inhibits RGLG3 and RGLG4 ubiquitination activity. The sequence is that of Two-on-two hemoglobin-3 (GLB3) from Arabidopsis thaliana (Mouse-ear cress).